A 142-amino-acid chain; its full sequence is Hemoglobin subunit alpha-A (142 aa).

The 141-residue stretch at V2–R142 folds into the Globin domain. H59 is an O2 binding site. H88 provides a ligand contact to heme b.

Belongs to the globin family. As to quaternary structure, heterotetramer of two alpha chains and two beta chains. As to expression, red blood cells.

In terms of biological role, involved in oxygen transport from the lung to the various peripheral tissues. The protein is Hemoglobin subunit alpha-A (HBAA) of Accipiter gentilis (Northern goshawk).